Here is a 409-residue protein sequence, read N- to C-terminus: Nitrogen permease regulator 2 homolog (409 aa).

This sequence belongs to the NPR2 family.

The protein localises to the cytoplasm. It localises to the nucleus. Mediates inactivation of the TORC1 complex in response to amino acid starvation. Post-transcriptional regulator of nitrogen permeases. In Schizosaccharomyces pombe (strain 972 / ATCC 24843) (Fission yeast), this protein is Nitrogen permease regulator 2 homolog.